The primary structure comprises 500 residues: Lysine--tRNA ligase (500 aa).

Glu-410 and Glu-417 together coordinate Mg(2+).

It belongs to the class-II aminoacyl-tRNA synthetase family. Homodimer. Mg(2+) serves as cofactor.

The protein resides in the cytoplasm. The catalysed reaction is tRNA(Lys) + L-lysine + ATP = L-lysyl-tRNA(Lys) + AMP + diphosphate. The sequence is that of Lysine--tRNA ligase from Pseudomonas fluorescens (strain ATCC BAA-477 / NRRL B-23932 / Pf-5).